A 674-amino-acid chain; its full sequence is U-box domain-containing protein 16 (674 aa).

The region spanning N273–P347 is the U-box domain. 3 ARM repeats span residues T399–I438, Q441–G481, and A484–A523.

The enzyme catalyses S-ubiquitinyl-[E2 ubiquitin-conjugating enzyme]-L-cysteine + [acceptor protein]-L-lysine = [E2 ubiquitin-conjugating enzyme]-L-cysteine + N(6)-ubiquitinyl-[acceptor protein]-L-lysine.. It functions in the pathway protein modification; protein ubiquitination. In terms of biological role, functions as an E3 ubiquitin ligase. The protein is U-box domain-containing protein 16 (PUB16) of Arabidopsis thaliana (Mouse-ear cress).